Consider the following 470-residue polypeptide: Putative multidrug resistance protein MdtD (470 aa).

At 1–11 (MTELPDNTRWQ) the chain is on the periplasmic side. A helical membrane pass occupies residues 12–32 (LWIVAFGFFMQSLDTTIVNTA). Topologically, residues 33-48 (LPSMAKSLGESPLHMH) are cytoplasmic. Residues 49–69 (MVVVSYVLTVAVMLPASGWLA) traverse the membrane as a helical segment. The Periplasmic segment spans residues 70-76 (DKIGVRN). A helical transmembrane segment spans residues 77–97 (IFFAAIVLFTLGSLFCALSGT). Over 98–101 (LNQL) the chain is Cytoplasmic. The helical transmembrane segment at 102–124 (VLARVLQGVGGAMMVPVGRLTVM) threads the bilayer. At 125–137 (KIVPRAQYMAAMT) the chain is on the periplasmic side. Residues 138-158 (FVTLPGQIGPLLGPALGGVLV) traverse the membrane as a helical segment. Topologically, residues 159-164 (EYASWH) are cytoplasmic. The chain crosses the membrane as a helical span at residues 165–185 (WIFLINIPVGIVGAMATFMLM). Topologically, residues 186–196 (PNYTIETRRFD) are periplasmic. The chain crosses the membrane as a helical span at residues 197 to 217 (LPGFLLLAIGMAVLTLALDGS). Residues 218–224 (KSMGISP) are Cytoplasmic-facing. The helical transmembrane segment at 225-245 (WTLAGLAAGGAAAILLYLFHA) threads the bilayer. Residues 246–262 (KKNSGALFSLRLFRTPT) are Periplasmic-facing. A helical membrane pass occupies residues 263–283 (FSLGLLGSFAGRIGSGMLPFM). Topologically, residues 284 to 285 (TP) are cytoplasmic. Residues 286–306 (VFLQIGLGFSPFHAGLMMIPM) form a helical membrane-spanning segment. Residues 307–341 (VLGSMGMKRIVVQIVNRFGYRRVLVATTLGLALVS) lie on the Periplasmic side of the membrane. The chain crosses the membrane as a helical span at residues 342 to 362 (LLFMSVALLGWYYLLPLVLLL). Residues 363–395 (QGMVNSARFSSMNTLTLKDLPDTLASSGNSLLS) lie on the Cytoplasmic side of the membrane. A helical membrane pass occupies residues 396–416 (MIMQLSMSIGVTIAGMLLGMF). The Periplasmic portion of the chain corresponds to 417–430 (GQQHIGIDSSATHH). The helical transmembrane segment at 431-451 (VFMYTWLCMAVIIALPAIIFA) threads the bilayer. At 452–470 (RVPNDTQQNMVISRRKRSL) the chain is on the cytoplasmic side.

This sequence belongs to the major facilitator superfamily. TCR/Tet family.

It localises to the cell inner membrane. This Salmonella agona (strain SL483) protein is Putative multidrug resistance protein MdtD.